Reading from the N-terminus, the 298-residue chain is Iron/alpha-ketoglutarate-dependent dioxygenase ausO (298 aa).

Residues histidine 130, aspartate 132, and histidine 211 each contribute to the Fe cation site.

The protein belongs to the PhyH family. In terms of assembly, homodimer. Fe cation serves as cofactor.

It participates in secondary metabolite biosynthesis; terpenoid biosynthesis. Iron/alpha-ketoglutarate-dependent dioxygenase; part of the gene cluster that mediates the biosynthesis of calidodehydroaustin, a fungal meroterpenoid. The first step of the pathway is the synthesis of 3,5-dimethylorsellinic acid by the polyketide synthase ausA. 3,5-dimethylorsellinic acid is then prenylated by the polyprenyl transferase ausN. Further epoxidation by the FAD-dependent monooxygenase ausM and cyclization by the probable terpene cyclase ausL lead to the formation of protoaustinoid A. Protoaustinoid A is then oxidized to spiro-lactone preaustinoid A3 by the combined action of the FAD-binding monooxygenases ausB and ausC, and the dioxygenase ausE. Acid-catalyzed keto-rearrangement and ring contraction of the tetraketide portion of preaustinoid A3 by ausJ lead to the formation of preaustinoid A4. The aldo-keto reductase ausK, with the help of ausH, is involved in the next step by transforming preaustinoid A4 into isoaustinone which is in turn hydroxylated by the P450 monooxygenase ausI to form austinolide. The cytochrome P450 monooxygenase ausG modifies austinolide to austinol. Austinol is further acetylated to austin by the O-acetyltransferase ausP, which spontaneously changes to dehydroaustin. The cytochrome P450 monooxygenase ausR then converts dehydroaustin is into 7-dehydrodehydroaustin. The hydroxylation catalyzed by ausR permits the O-acetyltransferase ausQ to add an additional acetyl group to the molecule, leading to the formation of acetoxydehydroaustin. The short chain dehydrogenase ausT catalyzes the reduction of the double bond present between carbon atoms 1 and 2 to convert 7-dehydrodehydroaustin into 1,2-dihydro-7-hydroxydehydroaustin. AusQ catalyzes not only an acetylation reaction but also the addition of the PKS ausV diketide product to 1,2-dihydro-7-hydroxydehydroaustin, forming precalidodehydroaustin. Finally, the iron/alpha-ketoglutarate-dependent dioxygenase converts precalidodehydroaustin into calidodehydroaustin. In Aspergillus calidoustus, this protein is Iron/alpha-ketoglutarate-dependent dioxygenase ausO.